The following is a 466-amino-acid chain: ATP synthase subunit beta (466 aa).

ATP is bound at residue 155-162; it reads GGAGVGKT.

The protein belongs to the ATPase alpha/beta chains family. As to quaternary structure, F-type ATPases have 2 components, CF(1) - the catalytic core - and CF(0) - the membrane proton channel. CF(1) has five subunits: alpha(3), beta(3), gamma(1), delta(1), epsilon(1). CF(0) has three main subunits: a(1), b(2) and c(9-12). The alpha and beta chains form an alternating ring which encloses part of the gamma chain. CF(1) is attached to CF(0) by a central stalk formed by the gamma and epsilon chains, while a peripheral stalk is formed by the delta and b chains.

Its subcellular location is the cell inner membrane. It catalyses the reaction ATP + H2O + 4 H(+)(in) = ADP + phosphate + 5 H(+)(out). In terms of biological role, produces ATP from ADP in the presence of a proton gradient across the membrane. The catalytic sites are hosted primarily by the beta subunits. The sequence is that of ATP synthase subunit beta from Bordetella petrii (strain ATCC BAA-461 / DSM 12804 / CCUG 43448).